The primary structure comprises 222 residues: uncharacterized protein (222 aa).

An HTH gntR-type domain is found at 8 to 77; it reads AKKNQIIYRY…NTPGYFVCKD (70 aa).

This is an uncharacterized protein from Mycoplasma genitalium (strain ATCC 33530 / DSM 19775 / NCTC 10195 / G37) (Mycoplasmoides genitalium).